The following is a 373-amino-acid chain: Transcription factor bHLH87 (373 aa).

The tract at residues 127–227 (SAESENREIT…GGSSNISFQH (101 aa)) is disordered. The span at 188–218 (PQDDSEKGGFKLIYDENQSKSKKPRTEKERG) shows a compositional bias: basic and acidic residues. Residues 275-324 (ISTDPQTVAARQRRERISEKIRVLQTLVPGGTKMDTASMLDEAANYLKFL) enclose the bHLH domain.

Homodimer. Flowers.

Its subcellular location is the nucleus. The chain is Transcription factor bHLH87 (BHLH87) from Arabidopsis thaliana (Mouse-ear cress).